The following is a 268-amino-acid chain: L-aspartate dehydrogenase (268 aa).

2 residues coordinate NAD(+): Ala125 and Asn191. Residue His221 is part of the active site.

This sequence belongs to the L-aspartate dehydrogenase family.

The catalysed reaction is L-aspartate + NADP(+) + H2O = oxaloacetate + NH4(+) + NADPH + H(+). It carries out the reaction L-aspartate + NAD(+) + H2O = oxaloacetate + NH4(+) + NADH + H(+). It functions in the pathway cofactor biosynthesis; NAD(+) biosynthesis; iminoaspartate from L-aspartate (dehydrogenase route): step 1/1. In terms of biological role, specifically catalyzes the NAD or NADP-dependent dehydrogenation of L-aspartate to iminoaspartate. The chain is L-aspartate dehydrogenase from Brucella anthropi (strain ATCC 49188 / DSM 6882 / CCUG 24695 / JCM 21032 / LMG 3331 / NBRC 15819 / NCTC 12168 / Alc 37) (Ochrobactrum anthropi).